Consider the following 113-residue polypeptide: Protein NATD1 (113 aa).

The N-acetyltransferase domain maps to 22 to 112 (EHDRRRRQFT…PLPQYLERLQ (91 aa)).

It belongs to the NATD1 family.

The polypeptide is Protein NATD1 (NATD1) (Homo sapiens (Human)).